The chain runs to 440 residues: Ribulose bisphosphate carboxylase large chain (440 aa).

Residue lysine 4 is modified to N6,N6,N6-trimethyllysine. Substrate contacts are provided by asparagine 113 and threonine 163. Catalysis depends on lysine 165, which acts as the Proton acceptor. Lysine 167 is a binding site for substrate. Residues lysine 191, aspartate 193, and glutamate 194 each coordinate Mg(2+). At lysine 191 the chain carries N6-carboxylysine. The Proton acceptor role is filled by histidine 284. Substrate is bound by residues arginine 285, histidine 317, and serine 369.

Belongs to the RuBisCO large chain family. Type I subfamily. In terms of assembly, heterohexadecamer of 8 large chains and 8 small chains; disulfide-linked. The disulfide link is formed within the large subunit homodimers. It depends on Mg(2+) as a cofactor. In terms of processing, the disulfide bond which can form in the large chain dimeric partners within the hexadecamer appears to be associated with oxidative stress and protein turnover.

The protein localises to the plastid. It is found in the chloroplast. It catalyses the reaction 2 (2R)-3-phosphoglycerate + 2 H(+) = D-ribulose 1,5-bisphosphate + CO2 + H2O. The catalysed reaction is D-ribulose 1,5-bisphosphate + O2 = 2-phosphoglycolate + (2R)-3-phosphoglycerate + 2 H(+). Its function is as follows. RuBisCO catalyzes two reactions: the carboxylation of D-ribulose 1,5-bisphosphate, the primary event in carbon dioxide fixation, as well as the oxidative fragmentation of the pentose substrate in the photorespiration process. Both reactions occur simultaneously and in competition at the same active site. This is Ribulose bisphosphate carboxylase large chain from Polystichum munitum (Western sword-fern).